The chain runs to 93 residues: YcgL domain-containing protein Spea_2443 (93 aa).

Residues 1 to 85 enclose the YcgL domain; it reads MICAVYKSLR…PVVNLLEQHK (85 aa).

This is YcgL domain-containing protein Spea_2443 from Shewanella pealeana (strain ATCC 700345 / ANG-SQ1).